The sequence spans 650 residues: Chaperone protein HtpG (650 aa).

The segment at 1 to 349 is a; substrate-binding; the sequence is MTKTTKKFET…SSDLPLNVSR (349 aa). Residues 350–566 are b; sequence EILQEDVQIK…EHGLNANMER (217 aa). The tract at residues 567 to 650 is c; it reads ILRAMNQDVP…VADGKAAAGE (84 aa).

This sequence belongs to the heat shock protein 90 family. Homodimer.

It is found in the cytoplasm. In terms of biological role, molecular chaperone. Has ATPase activity. The sequence is that of Chaperone protein HtpG from Geobacter metallireducens (strain ATCC 53774 / DSM 7210 / GS-15).